Reading from the N-terminus, the 374-residue chain is Guanine nucleotide-binding protein subunit alpha-15 (374 aa).

One can recognise a G-alpha domain in the interval 41–374 (GELKLLLLGP…ARYLDEINLL (334 aa)). Positions 44-57 (KLLLLGPGESGKST) are G1 motif. GTP is bound by residues 49 to 56 (GPGESGKS), 183 to 189 (LRSRMPT), 208 to 212 (DAGGQ), 277 to 280 (NKTD), and A346. S56 and T189 together coordinate Mg(2+). The G2 motif stretch occupies residues 181–189 (DVLRSRMPT). A G3 motif region spans residues 204 to 213 (LRIVDAGGQK). The interval 273-280 (ILFLNKTD) is G4 motif. The G5 motif stretch occupies residues 344–349 (TCATDT).

It belongs to the G-alpha family. G(q) subfamily. G proteins are composed of 3 units; alpha, beta and gamma. The alpha chain contains the guanine nucleotide binding site.

Functionally, guanine nucleotide-binding proteins (G proteins) are involved as modulators or transducers in various transmembrane signaling systems. The sequence is that of Guanine nucleotide-binding protein subunit alpha-15 (Gna15) from Rattus norvegicus (Rat).